The sequence spans 1873 residues: Girdin (1873 aa).

The region spanning 12-132 (QFMTSPLVTW…KLLLLLLGCA (121 aa)) is the Calponin-homology (CH) domain. Positions 196–425 (HLRRLIDERD…EMAQKQSMDE (230 aa)) form a coiled coil. Phosphoserine occurs at positions 233, 237, and 449. Coiled coils occupy residues 458-1232 (TSSK…ESKN) and 1268-1385 (HKNL…KFYD). Disordered stretches follow at residues 816–841 (ENKS…NKRL) and 1013–1034 (EERM…GRES). Ser-1020 is modified (phosphoserine). Ser-1387 carries the phosphoserine modification. The segment at 1390-1408 (RRRGNWITLKMRKLIKSKK) is phosphoinositide-binding. The span at 1407-1416 (KKDINRERQK) shows a compositional bias: basic and acidic residues. Disordered regions lie at residues 1407–1459 (KKDI…LGTK), 1560–1602 (TTSF…SNNN), and 1616–1643 (QSRP…GSSP). Ser-1417 is subject to Phosphoserine; by PKB/AKT1. 4 stretches are compositionally biased toward polar residues: residues 1417-1430 (SLTL…SSEG), 1445-1459 (VGSN…LGTK), 1560-1579 (TTSF…STGS), and 1616-1626 (QSRPQSHSSGD). Phosphothreonine is present on Thr-1421. Residues 1674-1704 (KAGSPGSEVVTLQQFLEESNKLTSIQLKSSS) carry the GBA motif. Ser-1677, Ser-1692, and Ser-1719 each carry phosphoserine. The segment at 1715-1825 (SLSVSSDFLG…GTTRRTSIHD (111 aa)) is SH2-like; required for interaction with growth factor receptors. Positions 1738–1873 (SGKTPGDFYD…KSRSREQQSS (136 aa)) are disordered. Over residues 1745 to 1755 (FYDRRTTKPEF) the composition is skewed to basic and acidic residues. Tyr-1767 carries the phosphotyrosine modification. Composition is skewed to polar residues over residues 1768-1781 (TISS…STQG), 1789-1801 (TSVS…SNPY), and 1809-1820 (SVISTAEGTTRR). At Tyr-1801 the chain carries Phosphotyrosine. A phosphoserine mark is found at Ser-1822 and Ser-1839. Over residues 1822 to 1832 (SIHDFLSKDSR) the composition is skewed to basic and acidic residues. Over residues 1839-1852 (SSPPTAGSSSTTAS) the composition is skewed to low complexity. The segment covering 1858 to 1873 (QESRNSKSRSREQQSS) has biased composition (basic and acidic residues).

Belongs to the CCDC88 family. As to quaternary structure, homodimer. Interacts (via GBA motif) with guanine nucleotide-binding protein G(i) alpha subunits GNAI1, GNAI2 and GNAI3. Also interacts (via GNA motif) with guanine nucleotide-binding protein G(s) alpha subunit GNAS. Interaction with G(i) alpha subunits occurs before interaction with GNAS and is regulated by phosphorylation; phosphorylation at Ser-1677 enhances binding to G(i) alpha subunits while phosphorylation at Ser-1692 abolishes G(i) alpha subunit binding, promoting binding to GNAS. Interacts (via C-terminal SH2-like region) with growth factor receptors EGFR, INSR and KDR/VEGFR2 (via their autophosphorylated cytoplasmic tails). Forms a complex with EGFR and GNAI3 which leads to enhanced EGFR signaling and triggering of cell migration; ligand stimulation is required for recruitment of GNAI3 to the complex. Interacts (tyrosine-phosphorylated form) with phosphatidylinositol 3-kinase (PI3K) regulatory subunit PIK3R1/p85a (via SH2 domains); the interaction enables recruitment of PIK3R1 to the EGFR receptor, enhancing PI3K activity and cell migration. Interacts with serine/threonine-protein kinase PRKCQ; the interaction leads to phosphorylation of CCDC88A and inhibition of its guanine nucleotide exchange factor activity. Interacts (via C-terminus) with DISC1; the interaction is direct. Interacts with AKT proteins; the interaction is inhibited in the presence of DISC1. Interacts with AKT1/PKB (via C-terminus). The non-phosphorylated form interacts with phosphatidylinositol 4-phosphate [Pi(4)P] and weakly with phosphatidylinositol 3-phosphate [Pi(3)P]. Interacts with microtubules. Interacts with actin. Post-translationally, phosphorylation is induced by epidermal growth factor (EGF) in a phosphoinositide 3-kinase (PI3K)-dependent manner. Phosphorylation by AKT1/PKB is necessary for the delocalization from the cell membrane and for cell migration. Phosphorylated on tyrosine residues which promotes binding to phosphatidylinositol 3-kinase (PI3K) regulatory subunit PIK3R1/p85a and enhances PI3K activity. Tyrosine-phosphorylated by both receptor and non-receptor tyrosine kinases in vitro. Tyrosine phosphorylation is required for AKT1-dependent phosphorylation of Ser-1417. Phosphorylation at Ser-1692 by PRKCQ disrupts interaction with GNAI3 and inhibits guanine nucleotide exchange factor activity. Expressed in the dentate gyrus, pyramidal cell layer of hippocampal regions CA1 and CA3 at postnatal 15. Expressed highly in neurons. Weakly in neuron progenitors (at protein level). Expressed in the dentate granule cell layer of the hippocampus. Expressed highly in the adult testis, moderately in the brain and at a low level in the spleen, lungs and fat.

Its subcellular location is the cell membrane. It localises to the cytoplasm. The protein localises to the cytosol. It is found in the cytoplasmic vesicle. The protein resides in the cell projection. Its subcellular location is the lamellipodium. It localises to the cytoskeleton. The protein localises to the cilium basal body. It is found in the microtubule organizing center. The protein resides in the centrosome. Its subcellular location is the centriole. Its function is as follows. Bifunctional modulator of guanine nucleotide-binding proteins (G proteins). Acts as a non-receptor guanine nucleotide exchange factor which binds to and activates guanine nucleotide-binding protein G(i) alpha subunits. Also acts as a guanine nucleotide dissociation inhibitor for guanine nucleotide-binding protein G(s) subunit alpha GNAS. Essential for cell migration. Interacts in complex with G(i) alpha subunits with the EGFR receptor, retaining EGFR at the cell membrane following ligand stimulation and promoting EGFR signaling which triggers cell migration. Binding to Gi-alpha subunits displaces the beta and gamma subunits from the heterotrimeric G-protein complex which enhances phosphoinositide 3-kinase (PI3K)-dependent phosphorylation and kinase activity of AKT1/PKB. Phosphorylation of AKT1/PKB induces the phosphorylation of downstream effectors GSK3 and FOXO1/FKHR, and regulates DNA replication and cell proliferation. Binds in its tyrosine-phosphorylated form to the phosphatidylinositol 3-kinase (PI3K) regulatory subunit PIK3R1 which enables recruitment of PIK3R1 to the EGFR receptor, enhancing PI3K activity and cell migration. Plays a role as a key modulator of the AKT-mTOR signaling pathway, controlling the tempo of the process of newborn neuron integration during adult neurogenesis, including correct neuron positioning, dendritic development and synapse formation. Inhibition of G(s) subunit alpha GNAS leads to reduced cellular levels of cAMP and suppression of cell proliferation. Essential for the integrity of the actin cytoskeleton. Required for formation of actin stress fibers and lamellipodia. May be involved in membrane sorting in the early endosome. Plays a role in ciliogenesis and cilium morphology and positioning and this may partly be through regulation of the localization of scaffolding protein CROCC/Rootletin. This chain is Girdin (Ccdc88a), found in Mus musculus (Mouse).